The primary structure comprises 351 residues: uncharacterized protein (351 aa).

It belongs to the bacterial luciferase oxidoreductase family.

This is an uncharacterized protein from Sinorhizobium fredii (strain NBRC 101917 / NGR234).